The primary structure comprises 275 residues: Anthracycline biosynthesis protein DauV (275 aa).

2 consecutive VOC domains span residues 8–136 (APAW…VWRK) and 150–263 (SVGW…VVEL).

It participates in antibiotic biosynthesis; daunorubicin biosynthesis. Its pathway is antibiotic biosynthesis; carminomycin biosynthesis. Its function is as follows. Involved in the biosynthesis of the anthracyclines carminomycin and daunorubicin (daunomycin) which are aromatic polyketide antibiotics that exhibit high cytotoxicity and are widely applied in the chemotherapy of a variety of cancers. Acts jointly with DoxA in the conversion of 13-deoxycarminomycin and 13-deoxydaunorubicin to yield carminomycin and daunorubicin, respectively. The polypeptide is Anthracycline biosynthesis protein DauV (dauV) (Streptomyces sp. (strain C5)).